The primary structure comprises 256 residues: Triosephosphate isomerase (256 aa).

9–11 (NWK) is a substrate binding site. Catalysis depends on H94, which acts as the Electrophile. E166 serves as the catalytic Proton acceptor. Substrate is bound by residues G172, S211, and 232–233 (GG).

Belongs to the triosephosphate isomerase family. In terms of assembly, homodimer.

The protein localises to the cytoplasm. The catalysed reaction is D-glyceraldehyde 3-phosphate = dihydroxyacetone phosphate. It participates in carbohydrate biosynthesis; gluconeogenesis. The protein operates within carbohydrate degradation; glycolysis; D-glyceraldehyde 3-phosphate from glycerone phosphate: step 1/1. Functionally, involved in the gluconeogenesis. Catalyzes stereospecifically the conversion of dihydroxyacetone phosphate (DHAP) to D-glyceraldehyde-3-phosphate (G3P). This Natranaerobius thermophilus (strain ATCC BAA-1301 / DSM 18059 / JW/NM-WN-LF) protein is Triosephosphate isomerase.